Here is a 311-residue protein sequence, read N- to C-terminus: Ribosomal RNA large subunit methyltransferase F (311 aa).

It belongs to the methyltransferase superfamily. METTL16/RlmF family.

The protein localises to the cytoplasm. The enzyme catalyses adenosine(1618) in 23S rRNA + S-adenosyl-L-methionine = N(6)-methyladenosine(1618) in 23S rRNA + S-adenosyl-L-homocysteine + H(+). In terms of biological role, specifically methylates the adenine in position 1618 of 23S rRNA. This chain is Ribosomal RNA large subunit methyltransferase F, found in Pectobacterium carotovorum subsp. carotovorum (strain PC1).